Reading from the N-terminus, the 448-residue chain is tRNA-2-methylthio-N(6)-dimethylallyladenosine synthase (448 aa).

Residues 3-119 (GRVYVKTHGC…LPEMIDRARD (117 aa)) enclose the MTTase N-terminal domain. C12, C49, C82, C156, C160, and C163 together coordinate [4Fe-4S] cluster. The Radical SAM core domain maps to 142–374 (RAEGPTAFVS…QETINANARR (233 aa)). Residues 377 to 440 (ESMVGTVQRV…PNSLRGELLG (64 aa)) enclose the TRAM domain.

This sequence belongs to the methylthiotransferase family. MiaB subfamily. Monomer. [4Fe-4S] cluster is required as a cofactor.

It is found in the cytoplasm. It carries out the reaction N(6)-dimethylallyladenosine(37) in tRNA + (sulfur carrier)-SH + AH2 + 2 S-adenosyl-L-methionine = 2-methylsulfanyl-N(6)-dimethylallyladenosine(37) in tRNA + (sulfur carrier)-H + 5'-deoxyadenosine + L-methionine + A + S-adenosyl-L-homocysteine + 2 H(+). In terms of biological role, catalyzes the methylthiolation of N6-(dimethylallyl)adenosine (i(6)A), leading to the formation of 2-methylthio-N6-(dimethylallyl)adenosine (ms(2)i(6)A) at position 37 in tRNAs that read codons beginning with uridine. In Alkalilimnicola ehrlichii (strain ATCC BAA-1101 / DSM 17681 / MLHE-1), this protein is tRNA-2-methylthio-N(6)-dimethylallyladenosine synthase.